Here is a 468-residue protein sequence, read N- to C-terminus: UDP-glycosyltransferase 89B2 (468 aa).

UDP-alpha-D-glucose-binding positions include Ser287, 347–348 (WV), 365–373 (HCGWNSVME), and 387–390 (SADQ).

Belongs to the UDP-glycosyltransferase family.

Functionally, may glycosylate diterpenes or flavonols in leaves. This is UDP-glycosyltransferase 89B2 from Stevia rebaudiana (Stevia).